Here is a 363-residue protein sequence, read N- to C-terminus: MSSDLKQTPLYQNYVDRGAKIVEFGGWAMPVQFSSIKEEHNAARYEIGLFDVSHMGEIEVTGKDASQFVQYLLSNDTDNLTTSKALYTALCNEEGGVIDDLVIYKLADDNYLLVVNAANTEKDFNWILKHKEKFDVEVQNVSNQYGQLAIQGPKARDLINQLVDEDVTEMKMFEFKQGVKLFAANVILSQSGYTGEDGFEIYCNIDDTEKIWDGLLEYNVMPCGLGARDTLRLEAGLPLHGQDLTESITPYEGGIAFASKPLIDADFIGKSVLKDQKENGAPRRTVGLELLEKGIARTGYEVMDLDGNIIGEVTSGTQSPSSGKSIALAMIKRDEFEMGRELLVQVRKRQLKAKIVKKNQIDK.

It belongs to the GcvT family. The glycine cleavage system is composed of four proteins: P, T, L and H.

It carries out the reaction N(6)-[(R)-S(8)-aminomethyldihydrolipoyl]-L-lysyl-[protein] + (6S)-5,6,7,8-tetrahydrofolate = N(6)-[(R)-dihydrolipoyl]-L-lysyl-[protein] + (6R)-5,10-methylene-5,6,7,8-tetrahydrofolate + NH4(+). Its function is as follows. The glycine cleavage system catalyzes the degradation of glycine. The protein is Aminomethyltransferase of Staphylococcus aureus (strain bovine RF122 / ET3-1).